The chain runs to 214 residues: Phosphatidylserine decarboxylase proenzyme (214 aa).

The Schiff-base intermediate with substrate; via pyruvic acid role is filled by S182. S182 bears the Pyruvic acid (Ser); by autocatalysis mark.

Belongs to the phosphatidylserine decarboxylase family. PSD-A subfamily. In terms of assembly, heterodimer of a large membrane-associated beta subunit and a small pyruvoyl-containing alpha subunit. It depends on pyruvate as a cofactor. In terms of processing, is synthesized initially as an inactive proenzyme. Formation of the active enzyme involves a self-maturation process in which the active site pyruvoyl group is generated from an internal serine residue via an autocatalytic post-translational modification. Two non-identical subunits are generated from the proenzyme in this reaction, and the pyruvate is formed at the N-terminus of the alpha chain, which is derived from the carboxyl end of the proenzyme. The post-translation cleavage follows an unusual pathway, termed non-hydrolytic serinolysis, in which the side chain hydroxyl group of the serine supplies its oxygen atom to form the C-terminus of the beta chain, while the remainder of the serine residue undergoes an oxidative deamination to produce ammonia and the pyruvoyl prosthetic group on the alpha chain.

The protein localises to the cell membrane. It carries out the reaction a 1,2-diacyl-sn-glycero-3-phospho-L-serine + H(+) = a 1,2-diacyl-sn-glycero-3-phosphoethanolamine + CO2. Its pathway is phospholipid metabolism; phosphatidylethanolamine biosynthesis; phosphatidylethanolamine from CDP-diacylglycerol: step 2/2. In terms of biological role, catalyzes the formation of phosphatidylethanolamine (PtdEtn) from phosphatidylserine (PtdSer). This Burkholderia multivorans (strain ATCC 17616 / 249) protein is Phosphatidylserine decarboxylase proenzyme.